Here is a 383-residue protein sequence, read N- to C-terminus: Galactokinase (383 aa).

Residue 34 to 37 (EHTD) coordinates substrate. 124-130 (GAGLSSS) contacts ATP. Mg(2+) contacts are provided by S130 and E162. Catalysis depends on D174, which acts as the Proton acceptor. A substrate-binding site is contributed by Y223.

Belongs to the GHMP kinase family. GalK subfamily.

It is found in the cytoplasm. It catalyses the reaction alpha-D-galactose + ATP = alpha-D-galactose 1-phosphate + ADP + H(+). It functions in the pathway carbohydrate metabolism; galactose metabolism. Catalyzes the transfer of the gamma-phosphate of ATP to D-galactose to form alpha-D-galactose-1-phosphate (Gal-1-P). This chain is Galactokinase, found in Serratia proteamaculans (strain 568).